The chain runs to 624 residues: DNA mismatch repair protein MutL (624 aa).

Residues 340-355 (NKLDTDSHSQSHERGH) are compositionally biased toward basic and acidic residues. The disordered stretch occupies residues 340–415 (NKLDTDSHSQ…RGGATSSYRQ (76 aa)). Polar residues-rich tracts occupy residues 372–383 (HQTAPSTKASTE) and 391–415 (SPIS…SYRQ).

Belongs to the DNA mismatch repair MutL/HexB family.

This protein is involved in the repair of mismatches in DNA. It is required for dam-dependent methyl-directed DNA mismatch repair. May act as a 'molecular matchmaker', a protein that promotes the formation of a stable complex between two or more DNA-binding proteins in an ATP-dependent manner without itself being part of a final effector complex. This chain is DNA mismatch repair protein MutL, found in Shewanella sediminis (strain HAW-EB3).